We begin with the raw amino-acid sequence, 100 residues long: Small ribosomal subunit protein uS14c (100 aa).

The protein belongs to the universal ribosomal protein uS14 family. Part of the 30S ribosomal subunit.

It is found in the plastid. The protein resides in the chloroplast. Functionally, binds 16S rRNA, required for the assembly of 30S particles. This Chara vulgaris (Common stonewort) protein is Small ribosomal subunit protein uS14c.